Reading from the N-terminus, the 379-residue chain is 8-amino-7-oxononanoate synthase (379 aa).

2 residues coordinate substrate: R27 and R34. 114–115 (GY) provides a ligand contact to pyridoxal 5'-phosphate. A substrate-binding site is contributed by H139. Pyridoxal 5'-phosphate is bound by residues S187, 212–215 (DDAH), and 232–235 (TLSK). K235 carries the post-translational modification N6-(pyridoxal phosphate)lysine. T344 contacts substrate.

It belongs to the class-II pyridoxal-phosphate-dependent aminotransferase family. BioF subfamily. As to quaternary structure, homodimer. Pyridoxal 5'-phosphate is required as a cofactor.

The enzyme catalyses 6-carboxyhexanoyl-[ACP] + L-alanine + H(+) = (8S)-8-amino-7-oxononanoate + holo-[ACP] + CO2. It participates in cofactor biosynthesis; biotin biosynthesis. Its function is as follows. Catalyzes the decarboxylative condensation of pimeloyl-[acyl-carrier protein] and L-alanine to produce 8-amino-7-oxononanoate (AON), [acyl-carrier protein], and carbon dioxide. The protein is 8-amino-7-oxononanoate synthase of Methylobacterium sp. (strain 4-46).